The primary structure comprises 458 residues: NADH-ubiquinone oxidoreductase chain 4 (458 aa).

Transmembrane regions (helical) follow at residues 23 to 43 (LLWTATTFFSFLIAALSTLTL), 59 to 79 (IDQFSCPLIMLSCWLLPLTIM), 99 to 119 (LLILLQVLLCITFGASNLLMF), 148 to 168 (LYFLFYTLSASLPLLLALIMI), 174 to 194 (SLSIYIIPLSNLTLLLNTPWS), 197 to 217 (LWWIACFLAFLIKMPLYIFHL), 227 to 247 (PIAGSMILAAILLKLGGYGMI), 260 to 280 (LAVPFMIIAMWGMIVTSSICL), 289 to 311 (IAYSSVSHMGLVVAGIFTMTPWA), 315 to 337 (ALAMMIAHGLVSSGLLCLANITY), 355 to 375 (FPLMSFWWLMMTFANMALPPF), 396 to 416 (ILLLGLSMTLTALFSLNMLIM), and 438 to 458 (LMLMHMAPIILLIANPSAIMI).

The protein belongs to the complex I subunit 4 family.

The protein localises to the mitochondrion membrane. The enzyme catalyses a ubiquinone + NADH + 5 H(+)(in) = a ubiquinol + NAD(+) + 4 H(+)(out). Functionally, core subunit of the mitochondrial membrane respiratory chain NADH dehydrogenase (Complex I) that is believed to belong to the minimal assembly required for catalysis. Complex I functions in the transfer of electrons from NADH to the respiratory chain. The immediate electron acceptor for the enzyme is believed to be ubiquinone. The chain is NADH-ubiquinone oxidoreductase chain 4 (MT-ND4) from Petromyzon marinus (Sea lamprey).